Here is a 154-residue protein sequence, read N- to C-terminus: Ribosome maturation factor RimP (154 aa).

The protein belongs to the RimP family.

The protein resides in the cytoplasm. Functionally, required for maturation of 30S ribosomal subunits. This is Ribosome maturation factor RimP from Haemophilus ducreyi (strain 35000HP / ATCC 700724).